The following is a 1374-amino-acid chain: Serine/threonine-protein kinase LMTK1 (1374 aa).

The helical transmembrane segment at 32–52 threads the bilayer; the sequence is LAVVAVSFSGLFAVIVLMLAC. The Protein kinase domain occupies 125–395; it reads LLYLKEIGRG…PTAEEVHLLL (271 aa). Residues 131–139 and K156 each bind ATP; that span reads IGRGWFGKV. Catalysis depends on D253, which acts as the Proton acceptor. S495 is subject to Phosphoserine. Disordered stretches follow at residues 542–622, 667–731, 765–1195, 1245–1302, and 1320–1374; these read GHDP…LAEG, VGAR…LLGL, WTET…PAVP, QESP…AWDD, and AAPA…SKEA. Positions 606–620 are enriched in low complexity; the sequence is PSRSPSPSAGPLSLA. Over residues 680-690 the composition is skewed to polar residues; sequence SNVSANNNSGS. Low complexity-rich tracts occupy residues 719-731, 801-831, and 847-856; these read PEPG…LLGL, SPSQ…TPAT, and SSSSPEVEAP. Residues 865 to 878 are compositionally biased toward polar residues; the sequence is EATSGIFTDTSSDG. Over residues 900 to 914 the composition is skewed to low complexity; sequence PDSLDSLDIPSSASD. Over residues 978–987 the composition is skewed to polar residues; it reads RLSTSLSGLN. S1029 is modified (phosphoserine). Residues 1063–1073 are compositionally biased toward polar residues; that stretch reads EGSSPEPSTCP. The span at 1138–1155 shows a compositional bias: low complexity; the sequence is TPRAPLRLALPGLPAALE. Residues 1158–1173 show a composition bias toward acidic residues; the sequence is PEEEEEDSEDSDESDE. Residues S1168, S1171, S1184, S1187, and S1262 each carry the phosphoserine modification. Residues 1272–1291 show a composition bias toward polar residues; the sequence is GSPSAPNRPQQADGSPNGST. The segment covering 1321–1332 has biased composition (pro residues); that stretch reads APAPAAPTPTPA. A compositionally biased stretch (polar residues) spans 1337 to 1352; sequence FTVSPAPTSRFSITHV. Positions 1353 to 1363 are enriched in basic and acidic residues; sequence SDSDAESKRGP. The segment covering 1365-1374 has biased composition (gly residues); that stretch reads AGAGGESKEA.

It belongs to the protein kinase superfamily. Tyr protein kinase family. Interacts with CDK5. In terms of processing, autophosphorylated. Phosphorylated by CDK5. In terms of tissue distribution, expressed in brain.

Its subcellular location is the membrane. It is found in the cytoplasm. It localises to the perinuclear region. It catalyses the reaction L-seryl-[protein] + ATP = O-phospho-L-seryl-[protein] + ADP + H(+). It carries out the reaction L-threonyl-[protein] + ATP = O-phospho-L-threonyl-[protein] + ADP + H(+). In terms of biological role, may be involved in neuronal differentiation. This is Serine/threonine-protein kinase LMTK1 (AATK) from Homo sapiens (Human).